We begin with the raw amino-acid sequence, 480 residues long: MFS-type transporter oryF (480 aa).

The segment covering 1–10 (MAEEVNERTR) has biased composition (basic and acidic residues). Residues 1-24 (MAEEVNERTRLLSQSDDPSPSLEE) form a disordered region. Low complexity predominate over residues 11 to 22 (LLSQSDDPSPSL). A run of 12 helical transmembrane segments spans residues 41–61 (LCIAVISVYGLISPVIAAIIV), 81–101 (AFVSVYVLGWSFAPLVVGPLS), 107–127 (ISLLNTGHGLFLVFNALCAFA), 138–158 (FITGAVGSAPLSIGAGIIGDL), 170–190 (LYTLGPLLGPAIAPITGAYIV), 197–217 (AIFAWCSLYILITWVVGLCTL), 264–284 (FLGTQPIIQVLSLFMGYLFGL), 308–328 (ALNYISIAGGFILGSQITGSL), 351–371 (ILMLPAALLVPTGLLIYGWSA), 378–398 (IMPNIGIGIYALGLIMSYQCI), 415–435 (GALTILRSLLGFVLPILAPLI), and 443–463 (WGSSLLALWALVMGGLVPILL).

The protein belongs to the major facilitator superfamily.

Its subcellular location is the membrane. Functionally, MFS-type transporter; part of the gene cluster that mediates the biosynthesis of oryzines, natural products with an unusual maleidride backbone. The chain is MFS-type transporter oryF from Aspergillus oryzae (strain ATCC 42149 / RIB 40) (Yellow koji mold).